Consider the following 374-residue polypeptide: Alginate lyase (374 aa).

An N-terminal signal peptide occupies residues 1–23 (MHKTRLALSCLLGSLLLSGAVHA). Substrate-binding positions include 62 to 63 (SK), 135 to 136 (HT), and Y253.

This sequence belongs to the polysaccharide lyase 5 family.

The protein resides in the periplasm. The enzyme catalyses Eliminative cleavage of alginate to give oligosaccharides with 4-deoxy-alpha-L-erythro-hex-4-enuronosyl groups at their non-reducing ends and beta-D-mannuronate at their reducing end.. Catalyzes the depolymerization of alginate by cleaving the beta-1,4 glycosidic bond between two adjacent sugar residues via a beta-elimination mechanism. May serve to degrade mislocalized alginate that is trapped in the periplasmic space. The protein is Alginate lyase of Azotobacter vinelandii (strain DJ / ATCC BAA-1303).